The primary structure comprises 730 residues: MHVTRDFSHYVRTAGEGIKHIDLAVEGVHCAGCMAKIERGLSAIPDVTLARVNLTDRRVALEWKAGTLDPGRFIDRLEELGYKAYPFETESAEVAEVAESRFLLRCLGVAAFATMNVMMLSIPVWSGNVSDMLPEQRDFFHWLSALIALPAAAYAGQPFFRSAWRALSAKTTNMDVPISIGVILALGMSVVETIHHAEHAYFDAAIMLLTFLLVGRFLDQNMRRRTRAVAGNLAALKAETAAKFVGPDEISQVPVAAISPGDIVLLRPGERCAVDGTVIEGRSEIDQSLITGETLYVTAEQGTPVYAGSMNISGTLRVRVSAASEATLLAEIARLLDNALQARSRYMRLADRASRLYAPVVHATALITILGWVIAGASWHDAIVTGVAVLIITCPCALGLAIPTVQTVASGAMFKSGVLLNSGDAIERLAEADHVIFDKTGTLTLPDLEVMNAADIPADIFELAGRLALSSHHPVAAAVAQAAGARSPIVGAVEEAGQGVRADVDGAEIRLGRPSFCGAEALVGDGTRLDPEASIVAFSKGAEKFILWVRQGLRPDAQAVIAALKARNIGIEILSGDREPAVKAAAHALAIPEWRAGVTPADKIARIEELKRRGARVLMVGDGMNDAPSLAAAHVSMSPISAAHLSQATADLVFLGRPLAPVAAAIDSARKALHLMRQNLWLAIGYNVLAVPVAISGVVTPLIAAAAMSGSSILVMLNSLRARSDSREIV.

At methionine 1 to arginine 101 the chain is on the cytoplasmic side. The HMA domain occupies lysine 19 to tyrosine 85. The a metal cation site is built by cysteine 30 and cysteine 33. Residues phenylalanine 102–proline 123 traverse the membrane as a helical segment. At valine 124 to aspartate 138 the chain is on the extracellular side. Residues phenylalanine 139–serine 162 traverse the membrane as a helical segment. At alanine 163 to serine 168 the chain is on the cytoplasmic side. The helical transmembrane segment at alanine 169–valine 190 threads the bilayer. Residues valine 191–phenylalanine 202 are Extracellular-facing. The chain crosses the membrane as a helical span at residues aspartate 203–arginine 223. Topologically, residues arginine 224–arginine 352 are cytoplasmic. A helical membrane pass occupies residues alanine 353–alanine 375. Residues glycine 376 to alanine 382 lie on the Extracellular side of the membrane. Residues isoleucine 383–leucine 400 traverse the membrane as a helical segment. Residues alanine 401 to methionine 676 lie on the Cytoplasmic side of the membrane. Aspartate 438 acts as the 4-aspartylphosphate intermediate in catalysis. Mg(2+)-binding residues include aspartate 622 and aspartate 626. The helical transmembrane segment at arginine 677–serine 696 threads the bilayer. Residues glycine 697–proline 701 lie on the Extracellular side of the membrane. Residues leucine 702–leucine 720 traverse the membrane as a helical segment. Residues arginine 721–valine 730 are Cytoplasmic-facing.

This sequence belongs to the cation transport ATPase (P-type) (TC 3.A.3) family. Type IB subfamily.

It is found in the cell membrane. The catalysed reaction is ATP + H2O = ADP + phosphate + H(+). In terms of biological role, fixI is a pump of a specific cation involved in symbiotic nitrogen fixation. The four proteins FixG, FixH, FixI, and FixS may participate in a membrane-bound complex coupling the FixI cation pump with a redox process catalyzed by FixG. This is Nitrogen fixation protein FixI (fixI) from Bradyrhizobium diazoefficiens (strain JCM 10833 / BCRC 13528 / IAM 13628 / NBRC 14792 / USDA 110).